Reading from the N-terminus, the 747-residue chain is NAD(P)H-quinone oxidoreductase subunit 5, chloroplastic (747 aa).

16 helical membrane passes run 9 to 29 (WIIP…LLLF), 40 to 60 (WAFP…DLSI), 89 to 109 (IDSL…LVLI), 125 to 145 (FAYL…SNLI), 147 to 167 (VYIF…FWFT), 185 to 205 (GDFG…SLEF), 219 to 239 (NEVN…GSVA), 258 to 278 (TPIS…FLVA), 280 to 300 (LLPF…IGII), 327 to 347 (LGYM…FHLI), 354 to 374 (ALLF…VGYS), 396 to 416 (TAFL…CFWS), 425 to 445 (WLYS…TAFY), 552 to 572 (LFSM…GISF), 606 to 626 (FFTN…IASF), and 727 to 747 (YILF…SFFI).

The protein belongs to the complex I subunit 5 family. In terms of assembly, NDH is composed of at least 16 different subunits, 5 of which are encoded in the nucleus.

Its subcellular location is the plastid. It is found in the chloroplast thylakoid membrane. The catalysed reaction is a plastoquinone + NADH + (n+1) H(+)(in) = a plastoquinol + NAD(+) + n H(+)(out). The enzyme catalyses a plastoquinone + NADPH + (n+1) H(+)(in) = a plastoquinol + NADP(+) + n H(+)(out). NDH shuttles electrons from NAD(P)H:plastoquinone, via FMN and iron-sulfur (Fe-S) centers, to quinones in the photosynthetic chain and possibly in a chloroplast respiratory chain. The immediate electron acceptor for the enzyme in this species is believed to be plastoquinone. Couples the redox reaction to proton translocation, and thus conserves the redox energy in a proton gradient. In Lotus japonicus (Lotus corniculatus var. japonicus), this protein is NAD(P)H-quinone oxidoreductase subunit 5, chloroplastic (ndhF).